The primary structure comprises 361 residues: Spermidine/putrescine import ATP-binding protein PotA (361 aa).

In terms of domain architecture, ABC transporter spans 7–241 (IEVRNVSKRY…PQHRFVAQFI (235 aa)). Position 43 to 50 (43 to 50 (GPSGCGKT)) interacts with ATP.

It belongs to the ABC transporter superfamily. Spermidine/putrescine importer (TC 3.A.1.11.1) family. The complex is composed of two ATP-binding proteins (PotA), two transmembrane proteins (PotB and PotC) and a solute-binding protein (PotD).

The protein localises to the cell inner membrane. It catalyses the reaction ATP + H2O + polyamine-[polyamine-binding protein]Side 1 = ADP + phosphate + polyamineSide 2 + [polyamine-binding protein]Side 1.. In terms of biological role, part of the ABC transporter complex PotABCD involved in spermidine/putrescine import. Responsible for energy coupling to the transport system. The chain is Spermidine/putrescine import ATP-binding protein PotA from Pseudomonas fluorescens (strain Pf0-1).